The chain runs to 198 residues: Na(+)-translocating NADH-quinone reductase subunit E (198 aa).

6 helical membrane-spanning segments follow: residues 11-31 (SVFI…FLAV), 35-55 (VSTA…AVPV), 77-97 (FLNF…LEMV), 110-130 (GIFL…SFMV), 140-160 (VVYG…LAGI), and 176-196 (LGIT…FSGI).

This sequence belongs to the NqrDE/RnfAE family. In terms of assembly, composed of six subunits; NqrA, NqrB, NqrC, NqrD, NqrE and NqrF.

It is found in the cell inner membrane. It catalyses the reaction a ubiquinone + n Na(+)(in) + NADH + H(+) = a ubiquinol + n Na(+)(out) + NAD(+). Functionally, NQR complex catalyzes the reduction of ubiquinone-1 to ubiquinol by two successive reactions, coupled with the transport of Na(+) ions from the cytoplasm to the periplasm. NqrA to NqrE are probably involved in the second step, the conversion of ubisemiquinone to ubiquinol. In Pasteurella multocida (strain Pm70), this protein is Na(+)-translocating NADH-quinone reductase subunit E.